The chain runs to 124 residues: Large ribosomal subunit protein bL21 (124 aa).

The tract at residues 105-124 (TVKAEPKSKRAPAPEAAADA) is disordered. The span at 115–124 (APAPEAAADA) shows a compositional bias: low complexity.

The protein belongs to the bacterial ribosomal protein bL21 family. Part of the 50S ribosomal subunit. Contacts protein L20.

In terms of biological role, this protein binds to 23S rRNA in the presence of protein L20. This chain is Large ribosomal subunit protein bL21, found in Xanthobacter autotrophicus (strain ATCC BAA-1158 / Py2).